A 666-amino-acid chain; its full sequence is tRNA 5-methylaminomethyl-2-thiouridine biosynthesis bifunctional protein MnmC (666 aa).

The tract at residues 1-245 (MKQYAIQPAT…KREMLCGVME (245 aa)) is tRNA (mnm(5)s(2)U34)-methyltransferase. An FAD-dependent cmnm(5)s(2)U34 oxidoreductase region spans residues 270–666 (IGGGIASALL…RKLLKGKAVK (397 aa)).

The protein in the N-terminal section; belongs to the methyltransferase superfamily. tRNA (mnm(5)s(2)U34)-methyltransferase family. This sequence in the C-terminal section; belongs to the DAO family. FAD serves as cofactor.

It localises to the cytoplasm. It carries out the reaction 5-aminomethyl-2-thiouridine(34) in tRNA + S-adenosyl-L-methionine = 5-methylaminomethyl-2-thiouridine(34) in tRNA + S-adenosyl-L-homocysteine + H(+). Functionally, catalyzes the last two steps in the biosynthesis of 5-methylaminomethyl-2-thiouridine (mnm(5)s(2)U) at the wobble position (U34) in tRNA. Catalyzes the FAD-dependent demodification of cmnm(5)s(2)U34 to nm(5)s(2)U34, followed by the transfer of a methyl group from S-adenosyl-L-methionine to nm(5)s(2)U34, to form mnm(5)s(2)U34. This is tRNA 5-methylaminomethyl-2-thiouridine biosynthesis bifunctional protein MnmC from Salmonella typhi.